A 239-amino-acid polypeptide reads, in one-letter code: Major centromere autoantigen B (239 aa).

Residues 28 to 185 (AGFGGGPNAT…DDEVPVPSFG (158 aa)) are disordered. Threonine 37 and threonine 39 each carry phosphothreonine. Composition is skewed to acidic residues over residues 46 to 117 (GEEE…EAED) and 148 to 179 (GEEDSESDSEEEEEDDDEDEDDEDDEEEDDEV). The segment at 176-239 (DDEVPVPSFG…AGARGLGHQS (64 aa)) is homodimerization.

Antiparallel homodimer. Interacts with CENPT. Identified in a centromere complex containing histones H2A, H2B and H4, and at least CENPA, CENPB, CENPC, CENPT, CENPN, HJURP, SUPT16H, SSRP1 and RSF1. In terms of processing, poly-ADP-ribosylated by PARP1. N-terminally methylated by METTL11A/NTM1. Alpha-N-methylation is stimulated in response extracellular stimuli, including increased cell density and heat shock, and seems to facilitate binding to CENP-B boxes. Chromatin-bound CENP-B is primarily trimethylated.

The protein localises to the nucleus. It localises to the chromosome. It is found in the centromere. Its function is as follows. Interacts with centromeric heterochromatin in chromosomes and binds to a specific 17 bp subset of alphoid satellite DNA, called the CENP-B box. May organize arrays of centromere satellite DNA into a higher-order structure which then directs centromere formation and kinetochore assembly in mammalian chromosomes. In Ovis aries (Sheep), this protein is Major centromere autoantigen B (CENPB).